Here is a 212-residue protein sequence, read N- to C-terminus: ECF RNA polymerase sigma factor SigD (212 aa).

The interval 49 to 119 (ETIRPIVVRY…VADAHRAAGR (71 aa)) is sigma-70 factor domain-2. The Polymerase core binding signature appears at 75–78 (DVAQ). The sigma-70 factor domain-4 stretch occupies residues 152-201 (NELLEILPAKQREILILRVVVGLSAEETAAAVGSTTGAVRVAQHRALQRL). Residues 176 to 195 (AEETAAAVGSTTGAVRVAQH) constitute a DNA-binding region (H-T-H motif).

This sequence belongs to the sigma-70 factor family. ECF subfamily. Interacts transiently with the RNA polymerase catalytic core formed by RpoA, RpoB, RpoC and RpoZ (2 alpha, 1 beta, 1 beta' and 1 omega subunit) to form the RNA polymerase holoenzyme that can initiate transcription. Interacts (via sigma-70 factor domain 4) with RsdA.

In terms of biological role, sigma factors are initiation factors that promote the attachment of RNA polymerase to specific initiation sites and are then released. Extracytoplasmic function (ECF) sigma factors are held in an inactive form by an anti-sigma factor until released by regulated intramembrane proteolysis. The chain is ECF RNA polymerase sigma factor SigD (sigD) from Mycobacterium bovis (strain ATCC BAA-935 / AF2122/97).